A 567-amino-acid chain; its full sequence is Formate--tetrahydrofolate ligase (567 aa).

Residue 68-75 coordinates ATP; it reads TPLGEGKT.

Belongs to the formate--tetrahydrofolate ligase family.

The enzyme catalyses (6S)-5,6,7,8-tetrahydrofolate + formate + ATP = (6R)-10-formyltetrahydrofolate + ADP + phosphate. The protein operates within one-carbon metabolism; tetrahydrofolate interconversion. This is Formate--tetrahydrofolate ligase from Desulforamulus reducens (strain ATCC BAA-1160 / DSM 100696 / MI-1) (Desulfotomaculum reducens).